A 520-amino-acid chain; its full sequence is Transcription factor MYB33 (520 aa).

Residues Met-1–Arg-24 form a disordered region. HTH myb-type domains are found at residues Gly-29–Leu-81 and Arg-82–Gln-136. 2 consecutive DNA-binding regions (H-T-H motif) follow at residues Trp-57 to Leu-81 and Trp-109 to Ile-132. The span at Ser-331–Pro-342 shows a compositional bias: low complexity. Disordered stretches follow at residues Ser-331–Ser-359 and Glu-426–Leu-447.

Mostly expressed in stems, shoot apices, flowers and floral shoot tips, and, to a lower extent, in roots (e.g. root tips), seedlings, leaves and siliques.

Its subcellular location is the nucleus. Transcriptional activator of alpha-amylase expression that binds to 5'-CAACTGTC-3' motif in target gene promoter. Positive regulator of abscisic acid (ABA) responses leading to growth arrest during seed germination. In vegetative tissues, inhibits growth by reducing cell proliferation. Promotes the expression of aleurone-related genes (e.g. CP1, CP, GASA1, BXL1 and BXL2) in seeds. Together with MYB65 and MYB101, promotes the programmed cell death (PCD) the vacuolation of protein storage vacuoles (PSVs) in the aleurone layers during seed germination. Binds to a GARE site (GA-response element) in the LEAFY promoter, essential for its gibberellic acid (GA)-mediated induction. Together with MYB65, facilitates anther and tapetum development. This chain is Transcription factor MYB33, found in Arabidopsis thaliana (Mouse-ear cress).